The primary structure comprises 473 residues: Cysteine--tRNA ligase (473 aa).

Residue Cys-28 coordinates Zn(2+). A 'HIGH' region motif is present at residues 30–40 (PTVYNMPHIGN). Zn(2+) is bound by residues Cys-213, His-238, and Glu-242. Positions 270-274 (KMSKS) match the 'KMSKS' region motif. Residue Lys-273 participates in ATP binding.

This sequence belongs to the class-I aminoacyl-tRNA synthetase family. Zn(2+) is required as a cofactor.

It is found in the cytoplasm. It catalyses the reaction tRNA(Cys) + L-cysteine + ATP = L-cysteinyl-tRNA(Cys) + AMP + diphosphate. This is Cysteine--tRNA ligase from Methanosarcina mazei (strain ATCC BAA-159 / DSM 3647 / Goe1 / Go1 / JCM 11833 / OCM 88) (Methanosarcina frisia).